The following is a 489-amino-acid chain: Betaine aldehyde dehydrogenase (489 aa).

T26 and D93 together coordinate K(+). 150-152 (GAW) lines the NAD(+) pocket. K162 acts as the Charge relay system in catalysis. 176–179 (KPSE) provides a ligand contact to NAD(+). V180 contacts K(+). 229 to 232 (GVET) is a binding site for NAD(+). L245 provides a ligand contact to K(+). E251 acts as the Proton acceptor in catalysis. Positions 253, 285, and 386 each coordinate NAD(+). C285 acts as the Nucleophile in catalysis. C285 carries the cysteine sulfenic acid (-SOH) modification. K(+) contacts are provided by K456 and G459. Catalysis depends on E463, which acts as the Charge relay system.

It belongs to the aldehyde dehydrogenase family. Dimer of dimers. Requires K(+) as cofactor.

It catalyses the reaction betaine aldehyde + NAD(+) + H2O = glycine betaine + NADH + 2 H(+). Its pathway is amine and polyamine biosynthesis; betaine biosynthesis via choline pathway; betaine from betaine aldehyde: step 1/1. Functionally, involved in the biosynthesis of the osmoprotectant glycine betaine. Catalyzes the irreversible oxidation of betaine aldehyde to the corresponding acid. The chain is Betaine aldehyde dehydrogenase from Paraburkholderia phymatum (strain DSM 17167 / CIP 108236 / LMG 21445 / STM815) (Burkholderia phymatum).